A 180-amino-acid chain; its full sequence is Protein GrpE (180 aa).

Positions 1 to 21 (MSEEVKEQNLPEVEPVQEAAS) are disordered.

Belongs to the GrpE family. Homodimer.

It is found in the cytoplasm. Participates actively in the response to hyperosmotic and heat shock by preventing the aggregation of stress-denatured proteins, in association with DnaK and GrpE. It is the nucleotide exchange factor for DnaK and may function as a thermosensor. Unfolded proteins bind initially to DnaJ; upon interaction with the DnaJ-bound protein, DnaK hydrolyzes its bound ATP, resulting in the formation of a stable complex. GrpE releases ADP from DnaK; ATP binding to DnaK triggers the release of the substrate protein, thus completing the reaction cycle. Several rounds of ATP-dependent interactions between DnaJ, DnaK and GrpE are required for fully efficient folding. This Campylobacter concisus (strain 13826) protein is Protein GrpE.